The following is a 125-amino-acid chain: SOSS complex subunit C homolog (125 aa).

The segment at 43–77 (MPSPQLLGQPTVAPEFLPQGVGLPTNATPPRSAFN) is disordered. Positions 67–77 (TNATPPRSAFN) are enriched in polar residues.

The protein belongs to the SOSS-C family.

This is SOSS complex subunit C homolog from Drosophila persimilis (Fruit fly).